A 90-amino-acid polypeptide reads, in one-letter code: Probable Fe(2+)-trafficking protein (90 aa).

Belongs to the Fe(2+)-trafficking protein family.

Functionally, could be a mediator in iron transactions between iron acquisition and iron-requiring processes, such as synthesis and/or repair of Fe-S clusters in biosynthetic enzymes. This is Probable Fe(2+)-trafficking protein from Laribacter hongkongensis (strain HLHK9).